The following is a 211-amino-acid chain: ATP phosphoribosyltransferase (211 aa).

Belongs to the ATP phosphoribosyltransferase family. Short subfamily. As to quaternary structure, heteromultimer composed of HisG and HisZ subunits.

Its subcellular location is the cytoplasm. It carries out the reaction 1-(5-phospho-beta-D-ribosyl)-ATP + diphosphate = 5-phospho-alpha-D-ribose 1-diphosphate + ATP. The protein operates within amino-acid biosynthesis; L-histidine biosynthesis; L-histidine from 5-phospho-alpha-D-ribose 1-diphosphate: step 1/9. In terms of biological role, catalyzes the condensation of ATP and 5-phosphoribose 1-diphosphate to form N'-(5'-phosphoribosyl)-ATP (PR-ATP). Has a crucial role in the pathway because the rate of histidine biosynthesis seems to be controlled primarily by regulation of HisG enzymatic activity. This is ATP phosphoribosyltransferase from Pseudomonas fluorescens (strain SBW25).